The chain runs to 266 residues: UPF0294 protein YafD (266 aa).

Belongs to the UPF0294 family.

It localises to the cytoplasm. This is UPF0294 protein YafD from Salmonella typhi.